Consider the following 258-residue polypeptide: E3 ubiquitin ligase TRIM40 (258 aa).

Residues 14–56 (CPICQESLKEAVSTNCGHLFCRVCLTQHVEKASASGVFCCPLC) form an RING-type zinc finger. The B box-type zinc-finger motif lies at 66–107 (GTGYICPNHQKRVCRFCEESRLLLCVECLVSPEHMSHHELTI). Zn(2+) is bound by residues Cys71, His74, Cys93, and His99. Residues 107–159 (IENALSHYKERLNRRSRKLRKDIAELQRLKAQQEKKLQALQFQVDHGNHRLEA) are a coiled coil.

It belongs to the TRIM/RBCC family. Interacts with NEDD8. Highly expressed in normal gastrointestinal epithelia but that is down-regulated in gastrointestinal carcinomas and chronic inflammatory lesions of the gastrointestinal tract.

The enzyme catalyses S-ubiquitinyl-[E2 ubiquitin-conjugating enzyme]-L-cysteine + [acceptor protein]-L-lysine = [E2 ubiquitin-conjugating enzyme]-L-cysteine + N(6)-ubiquitinyl-[acceptor protein]-L-lysine.. In terms of biological role, E3 ubiquitin-protein ligase that plays a role in the limitation of the innate immune response. Mediates inhibition of the RLR signaling pathway by ubiquitinating RIGI and IFIH1 receptors, leading to their proteasomal degradation. Also promotes the neddylation of IKBKG/NEMO, stabilizing NFKBIA, and thereby inhibiting of NF-kappa-B nuclear translocation and activation. This chain is E3 ubiquitin ligase TRIM40 (TRIM40), found in Homo sapiens (Human).